The following is a 71-amino-acid chain: Phenoloxidase 3 (71 aa).

Cu cation-binding residues include histidine 3 and histidine 29.

It belongs to the tyrosinase family. Cu(2+) serves as cofactor. In terms of processing, upon activation, a trypsin type protease cleaves prophenol oxidase to yield the active enzyme. As to expression, hemocytes and plasma.

Its subcellular location is the secreted. It carries out the reaction 2 L-dopa + O2 = 2 L-dopaquinone + 2 H2O. The enzyme catalyses L-tyrosine + O2 = L-dopaquinone + H2O. In terms of biological role, this is a copper-containing oxidase that functions in the formation of pigments such as melanins and other polyphenolic compounds. Catalyzes the rate-limiting conversions of tyrosine to DOPA, DOPA to DOPA-quinone and possibly 5,6 dihydroxyindole to indole-5'6 quinone. In Sarcophaga argyrostoma (Flesh fly), this protein is Phenoloxidase 3.